Here is a 473-residue protein sequence, read N- to C-terminus: MKSILDGLADTTFRTITTDLLYVGSNDIQYEDIKGDMASKLGYFPQKFPLTSFRGSPFQEKMTAGDNSPLVPAGDTTNITEFYNKSLSSFKENEDNIQCGENFMDMECFMILNPSQQLAIAVLSLTLGTFTVLENLLVLCVILHSRSLRCRPSYHFIGSLAVADLLGSVIFVYSFVDFHVFHRKDSPNVFLFKLGGVTASFTASVGSLFLTAIDRYISIHRPLAYKRIVTRPKAVVAFCLMWTIAIVIAVLPLLGWNCKKLQSVCSDIFPLIDETYLMFWIGVTSVLLLFIVYAYMYILWKAHSHAVRMIQRGTQKSIIIHTSEDGKVQVTRPDQARMDIRLAKTLVLILVVLIICWGPLLAIMVYDVFGKMNKLIKTVFAFCSMLCLLNSTVNPIIYALRSKDLRHAFRSMFPSCEGTAQPLDNSMGDSDCLHKHANNTASMHRAAESCIKSTVKIAKVTMSVSTDTSAEAL.

Residues 1 to 121 (MKSILDGLAD…LNPSQQLAIA (121 aa)) are Extracellular-facing. The required for mitochondrial localization stretch occupies residues 2–23 (KSILDGLADTTFRTITTDLLYV). Asn-78 and Asn-84 each carry an N-linked (GlcNAc...) asparagine glycan. A helical transmembrane segment spans residues 122–142 (VLSLTLGTFTVLENLLVLCVI). The Cytoplasmic portion of the chain corresponds to 143 to 155 (LHSRSLRCRPSYH). A helical membrane pass occupies residues 156 to 176 (FIGSLAVADLLGSVIFVYSFV). Topologically, residues 177–188 (DFHVFHRKDSPN) are extracellular. A helical transmembrane segment spans residues 189–209 (VFLFKLGGVTASFTASVGSLF). At 210–233 (LTAIDRYISIHRPLAYKRIVTRPK) the chain is on the cytoplasmic side. The helical transmembrane segment at 234–254 (AVVAFCLMWTIAIVIAVLPLL) threads the bilayer. At 255–278 (GWNCKKLQSVCSDIFPLIDETYLM) the chain is on the extracellular side. A helical membrane pass occupies residues 279-299 (FWIGVTSVLLLFIVYAYMYIL). Residues 300-345 (WKAHSHAVRMIQRGTQKSIIIHTSEDGKVQVTRPDQARMDIRLAKT) are Cytoplasmic-facing. The chain crosses the membrane as a helical span at residues 346–366 (LVLILVVLIICWGPLLAIMVY). Residues 367 to 378 (DVFGKMNKLIKT) are Extracellular-facing. The helical transmembrane segment at 379–399 (VFAFCSMLCLLNSTVNPIIYA) threads the bilayer. Over 400–473 (LRSKDLRHAF…VSTDTSAEAL (74 aa)) the chain is Cytoplasmic. Residue Cys-416 is the site of S-palmitoyl cysteine attachment. Phosphoserine is present on residues Ser-426 and Ser-430.

Belongs to the G-protein coupled receptor 1 family. As to quaternary structure, interacts (via C-terminus) with CNRIP1. Associates with G protein alpha subunits, including G(i) alpha-1/GNAI1, G(i) alpha-3/GNAI3 and G(o)-alpha/GNAO1; palmitoylation is important for interaction with GNAI3 and GNAO1. Palmitoylation at Cys-416 is important for recruitment at both plasma membrane and lipid rafts and association with G protein alpha subunits. In terms of tissue distribution, expressed in brain neurons (at protein level). Detected throughout the striatum, cortex and hippocampus, with highest levels in the lateral striatum. In rostral brain regions, high expression levels in the dorsal lateral striatum, while in the caudal brain regions, high levels are observed in the ventral lateral striatum. Expressed in neurons. In the hypothalamus, expressed in both GABAergic and glutamatergic presynaptic terminals of POMC neurons (at protein level). Expressed in striated muscles, including skeletal muscles (gastrocnemius and rectus abdominis) and myocardium (at protein level). Expressed in the liver, with highest levels in Kupffer cells and lower levels in endothelial cells as well as hepatocytes, particularly in perivascular areas (at protein level). The hepatic expression level is up-regulated in obese mice compared to lean animals.

The protein localises to the cell membrane. The protein resides in the mitochondrion outer membrane. It localises to the cell projection. It is found in the axon. Its subcellular location is the presynapse. With respect to regulation, hemopressin, a peptide derived from hemoglobin subunit alpha (HBA1 and/or HBA2), acts as an antagonist peptide: hemopressin-binding efficiently blocks cannabinoid receptor CNR1 and subsequent signaling. In terms of biological role, G-protein coupled receptor for cannabinoids, including endocannabinoids (eCBs), such as N-arachidonoylethanolamide (also called anandamide or AEA) and 2-arachidonoylglycerol (2-AG). Mediates many cannabinoid-induced effects, acting, among others, on food intake, memory loss, gastrointestinal motility, catalepsy, ambulatory activity, anxiety, chronic pain. Signaling typically involves reduction in cyclic AMP. In the hypothalamus, may have a dual effect on mitochondrial respiration depending upon the agonist dose and possibly upon the cell type. Increases respiration at low doses, while decreases respiration at high doses. At high doses, CNR1 signal transduction involves G-protein alpha-i protein activation and subsequent inhibition of mitochondrial soluble adenylate cyclase, decrease in cyclic AMP concentration, inhibition of protein kinase A (PKA)-dependent phosphorylation of specific subunits of the mitochondrial electron transport system, including NDUFS2. In the hypothalamus, inhibits leptin-induced reactive oxygen species (ROS) formation and mediates cannabinoid-induced increase in SREBF1 and FASN gene expression. In response to cannabinoids, drives the release of orexigenic beta-endorphin, but not that of melanocyte-stimulating hormone alpha/alpha-MSH, from hypothalamic POMC neurons, hence promoting food intake. In the hippocampus, regulates cellular respiration and energy production in response to cannabinoids. Involved in cannabinoid-dependent depolarization-induced suppression of inhibition (DSI), a process in which depolarization of CA1 postsynaptic pyramidal neurons mobilizes eCBs, which retrogradely activate presynaptic CB1 receptors, transiently decreasing GABAergic inhibitory neurotransmission. Also reduces excitatory synaptic transmission. In superior cervical ganglions and cerebral vascular smooth muscle cells, inhibits voltage-gated Ca(2+) channels in a constitutive, as well as agonist-dependent manner. In cerebral vascular smooth muscle cells, cannabinoid-induced inhibition of voltage-gated Ca(2+) channels leads to vasodilation and decreased vascular tone. Induces leptin production in adipocytes and reduces LRP2-mediated leptin clearance in the kidney, hence participating in hyperleptinemia. In adipose tissue, CNR1 signaling leads to increased expression of SREBF1, ACACA and FASN genes. In the liver, activation by endocannabinoids leads to increased de novo lipogenesis and reduced fatty acid catabolism, associated with increased expression of SREBF1/SREBP-1, GCK, ACACA, ACACB and FASN genes. May also affect de novo cholesterol synthesis and HDL-cholesteryl ether uptake. Peripherally modulates energy metabolism. In high carbohydrate diet-induced obesity, may decrease the expression of mitochondrial dihydrolipoyl dehydrogenase/DLD in striated muscles, as well as that of selected glucose/ pyruvate metabolic enzymes, hence affecting energy expenditure through mitochondrial metabolism. In response to cannabinoid anandamide, elicits a pro-inflammatory response in macrophages, which involves NLRP3 inflammasome activation and IL1B and IL18 secretion. In macrophages infiltrating pancreatic islets, this process may participate in the progression of type-2 diabetes and associated loss of pancreatic beta-cells. The sequence is that of Cannabinoid receptor 1 (Cnr1) from Mus musculus (Mouse).